The following is a 108-amino-acid chain: ATP-dependent Clp protease adapter protein ClpS (108 aa).

Residues 1–15 (MPHESSPDSQHEHGV) are compositionally biased toward basic and acidic residues. Positions 1–22 (MPHESSPDSQHEHGVAVEAARP) are disordered.

Belongs to the ClpS family. In terms of assembly, binds to the N-terminal domain of the chaperone ClpA.

Its function is as follows. Involved in the modulation of the specificity of the ClpAP-mediated ATP-dependent protein degradation. This Stenotrophomonas maltophilia (strain K279a) protein is ATP-dependent Clp protease adapter protein ClpS.